Consider the following 229-residue polypeptide: Cytochrome c oxidase subunit 2 (229 aa).

The Mitochondrial intermembrane segment spans residues 1 to 26 (MSTWANLGLQDSASPLMEQLIFFHDH). Residues 27–48 (ALLILVMITVLVGYLMFMLFFN) form a helical membrane-spanning segment. Residues 49-62 (SYVNRFLLHGQLIE) are Mitochondrial matrix-facing. The helical transmembrane segment at 63–82 (MIWTILPAIILLFIAMPSLR) threads the bilayer. Residues 83 to 229 (LLYLLDEINE…IKWISSTVNS (147 aa)) are Mitochondrial intermembrane-facing. Cu cation is bound by residues His161, Cys196, Glu198, Cys200, His204, and Met207. Glu198 lines the Mg(2+) pocket.

The protein belongs to the cytochrome c oxidase subunit 2 family. Component of the cytochrome c oxidase (complex IV, CIV), a multisubunit enzyme composed of a catalytic core of 3 subunits and several supernumerary subunits. The complex exists as a monomer or a dimer and forms supercomplexes (SCs) in the inner mitochondrial membrane with ubiquinol-cytochrome c oxidoreductase (cytochrome b-c1 complex, complex III, CIII). It depends on Cu cation as a cofactor.

It is found in the mitochondrion inner membrane. It carries out the reaction 4 Fe(II)-[cytochrome c] + O2 + 8 H(+)(in) = 4 Fe(III)-[cytochrome c] + 2 H2O + 4 H(+)(out). Its function is as follows. Component of the cytochrome c oxidase, the last enzyme in the mitochondrial electron transport chain which drives oxidative phosphorylation. The respiratory chain contains 3 multisubunit complexes succinate dehydrogenase (complex II, CII), ubiquinol-cytochrome c oxidoreductase (cytochrome b-c1 complex, complex III, CIII) and cytochrome c oxidase (complex IV, CIV), that cooperate to transfer electrons derived from NADH and succinate to molecular oxygen, creating an electrochemical gradient over the inner membrane that drives transmembrane transport and the ATP synthase. Cytochrome c oxidase is the component of the respiratory chain that catalyzes the reduction of oxygen to water. Electrons originating from reduced cytochrome c in the intermembrane space (IMS) are transferred via the dinuclear copper A center (CU(A)) of subunit 2 and heme A of subunit 1 to the active site in subunit 1, a binuclear center (BNC) formed by heme A3 and copper B (CU(B)). The BNC reduces molecular oxygen to 2 water molecules using 4 electrons from cytochrome c in the IMS and 4 protons from the mitochondrial matrix. This is Cytochrome c oxidase subunit 2 (mt:CoII) from Drosophila lowei (Fruit fly).